Here is a 284-residue protein sequence, read N- to C-terminus: Transcription factor lir-3 (284 aa).

Over residues 50–60 the composition is skewed to basic and acidic residues; sequence EPRISRDELRE. A disordered region spans residues 50-71; sequence EPRISRDELRETASSPVTFETR. Residues 224-247 form a C2H2-type zinc finger; the sequence is YKCKQCDYLDYRKSTMRKHTVSQH.

Expressed in FLP neurons.

The protein localises to the nucleus. In terms of biological role, positively regulates the RNA polymerase III-associated transcription of small non-coding RNAs. The sequence is that of Transcription factor lir-3 from Caenorhabditis elegans.